Here is a 108-residue protein sequence, read N- to C-terminus: Large ribosomal subunit protein uL24 (108 aa).

This sequence belongs to the universal ribosomal protein uL24 family. As to quaternary structure, part of the 50S ribosomal subunit.

One of two assembly initiator proteins, it binds directly to the 5'-end of the 23S rRNA, where it nucleates assembly of the 50S subunit. Functionally, one of the proteins that surrounds the polypeptide exit tunnel on the outside of the subunit. The polypeptide is Large ribosomal subunit protein uL24 (Geotalea daltonii (strain DSM 22248 / JCM 15807 / FRC-32) (Geobacter daltonii)).